Consider the following 452-residue polypeptide: Nebulette (452 aa).

A disordered region spans residues 1 to 26 (MKVPVSGDVKEETEEENVEQEENQEA). Positions 11–23 (EETEEENVEQEEN) are enriched in acidic residues. 12 Nebulin repeats span residues 29–63 (SLKPVIEDLSMELARKCTELISDIHYKEEYKKSKD), 64–98 (KCTFVTDTPMLNHVKNIGAFISEAKYKGTIKADLS), 101–135 (LYKDMPATIDSVFAREVSQLQSEVAYKQKHEAEKG), 138–172 (DYTHMKEPPEVRRAMEVNRHQSNISYRKDMQGTHT), 173–199 (YTAELDRPDIKKATQISKIISDAEYKK), 206–240 (KEPSVIGRPDFEHAVGASKLSSQVKYKEKFDNEMK), 263–278 (LASDWEYKRDFEENKG), 279–313 (LYHFDAEAPEHLHHKGNATLQSQVKYREEYEKNKG), 315–349 (SMLEFVETPSYQSSKEAQKMQSEKVYKEDFEKEIK), 352–386 (SSLDLDKTPAFLHVKHITNLMREKEYKKDLENEIK), 389–423 (GMELSSEVLDIQRAKRASEMASEKDYKRDLETEIK), and 426–452 (GMQVSTDTLDVQRAKRASEMASQVRMV).

As to quaternary structure, interacts (via nebulin repeats 1-5) with DESM (via rod region). Interacts (via SH3 domain) with XIRP2.

Its subcellular location is the cytoplasm. Its function is as follows. Binds to actin and plays an important role in the assembly of the Z-disk. May functionally link sarcomeric actin to the desmin intermediate filaments in the heart muscle sarcomeres. Isoform 2 might play a role in the assembly of focal adhesion. The protein is Nebulette (Nebl) of Mus musculus (Mouse).